Here is a 563-residue protein sequence, read N- to C-terminus: Arginine--tRNA ligase (563 aa).

A 'HIGH' region motif is present at residues P121 to H131.

It belongs to the class-I aminoacyl-tRNA synthetase family. Monomer.

It localises to the cytoplasm. It carries out the reaction tRNA(Arg) + L-arginine + ATP = L-arginyl-tRNA(Arg) + AMP + diphosphate. This is Arginine--tRNA ligase from Streptococcus agalactiae serotype Ia (strain ATCC 27591 / A909 / CDC SS700).